The sequence spans 280 residues: Probable endonuclease 4 (280 aa).

9 residues coordinate Zn(2+): His69, His109, Glu145, Asp179, His182, His216, Asp229, His231, and Glu261.

This sequence belongs to the AP endonuclease 2 family. Zn(2+) serves as cofactor.

It catalyses the reaction Endonucleolytic cleavage to 5'-phosphooligonucleotide end-products.. Its function is as follows. Endonuclease IV plays a role in DNA repair. It cleaves phosphodiester bonds at apurinic or apyrimidinic (AP) sites, generating a 3'-hydroxyl group and a 5'-terminal sugar phosphate. This chain is Probable endonuclease 4, found in Erwinia tasmaniensis (strain DSM 17950 / CFBP 7177 / CIP 109463 / NCPPB 4357 / Et1/99).